The sequence spans 572 residues: Proline--tRNA ligase (572 aa).

Belongs to the class-II aminoacyl-tRNA synthetase family. ProS type 1 subfamily. As to quaternary structure, homodimer.

It localises to the cytoplasm. It catalyses the reaction tRNA(Pro) + L-proline + ATP = L-prolyl-tRNA(Pro) + AMP + diphosphate. Functionally, catalyzes the attachment of proline to tRNA(Pro) in a two-step reaction: proline is first activated by ATP to form Pro-AMP and then transferred to the acceptor end of tRNA(Pro). As ProRS can inadvertently accommodate and process non-cognate amino acids such as alanine and cysteine, to avoid such errors it has two additional distinct editing activities against alanine. One activity is designated as 'pretransfer' editing and involves the tRNA(Pro)-independent hydrolysis of activated Ala-AMP. The other activity is designated 'posttransfer' editing and involves deacylation of mischarged Ala-tRNA(Pro). The misacylated Cys-tRNA(Pro) is not edited by ProRS. This Bacillus licheniformis (strain ATCC 14580 / DSM 13 / JCM 2505 / CCUG 7422 / NBRC 12200 / NCIMB 9375 / NCTC 10341 / NRRL NRS-1264 / Gibson 46) protein is Proline--tRNA ligase.